The chain runs to 1029 residues: Toll-like receptor 9 (1029 aa).

Positions 1 to 24 are cleaved as a signal peptide; it reads MGPYCAPHPLSLLVQAAALAAALA. At 25–815 the chain is on the extracellular side; sequence EGTLPAFLPC…LCLDETLSLD (791 aa). Cys-34 and Cys-44 are disulfide-bonded. DNA is bound at residue 46-50; that stretch reads WLFLK. 26 LRR repeats span residues 61-84, 86-109, 121-146, 149-165, 166-189, 197-220, 222-241, 242-267, 282-305, 307-331, 332-355, 362-385, 389-412, 414-439, 469-492, 494-517, 518-541, 543-570, 572-596, 598-620, 625-648, 650-673, 674-697, 699-721, 722-745, and 747-770; these read RANV…DFVH, SNLR…HFPC, VPTL…SLVS, LSHT…FTGL, HALR…ALEV, LGNL…LPPS, DTLL…DLAN, LTAL…CREC, LSRL…WFRG, GRLQ…IFND, LTQL…HLHL, LVSL…TLQS, LPKL…IFGA, PSLL…LGEV, CNLN…MFTR, SRLQ…QFVP, LTSL…SFTE, PQLE…SFVA, LPSL…LSSA, LRAL…LYLC, LRNL…HLDN, PKSL…SLTV, LPRL…SLPP, IRLQ…FFVR, ATRL…WFGS, and AGTL…AFVD. The N-linked (GlcNAc...) asparagine glycan is linked to Asn-63. Residues 71-76 and 94-108 contribute to the DNA site; these read SNRIHH and KWNC…MHFP. An intrachain disulfide couples Cys-97 to Cys-109. Asn-128 carries an N-linked (GlcNAc...) asparagine glycan. Tyr-131 lines the DNA pocket. Cys-177 and Cys-183 are disulfide-bonded. Residue 178 to 180 coordinates DNA; that stretch reads YYM. An N-linked (GlcNAc...) asparagine glycan is attached at Asn-199. Position 207 (Tyr-207) interacts with DNA. N-linked (GlcNAc...) asparagine glycosylation is found at Asn-209 and Asn-241. 2 disulfide bridges follow: Cys-254/Cys-267 and Cys-257/Cys-264. A lipid anchor (S-palmitoyl cysteine) is attached at Cys-257. Arg-261 contacts DNA. Cys-264 is lipidated: S-palmitoyl cysteine. 2 N-linked (GlcNAc...) asparagine glycosylation sites follow: Asn-339 and Asn-380. A disulfide bond links Cys-469 and Cys-498. Asn-472 and Asn-511 each carry an N-linked (GlcNAc...) asparagine glycan. An N-linked (GlcNAc...) asparagine glycan is attached at Asn-565. N-linked (GlcNAc...) asparagine glycosylation is found at Asn-667 and Asn-692. An N-linked (GlcNAc...) asparagine glycan is attached at Asn-729. 2 disulfide bridges follow: Cys-762–Cys-788 and Cys-764–Cys-807. Residues 816–836 traverse the membrane as a helical segment; that stretch reads CFGLSLLMVALGLAVPMLHHL. At 837–1029 the chain is on the cytoplasmic side; that stretch reads CGWDLWYCFH…NFCRGPTTAE (193 aa). The TIR domain maps to 864 to 1009; it reads LLYDAVVVFD…SFWANLGIAL (146 aa).

Belongs to the Toll-like receptor family. In terms of assembly, monomer and homodimer. Exists as a monomer in the absence of unmethylated cytidine-phosphate-guanosine (CpG) ligand. Proteolytic processing of an insertion loop (Z-loop) is required for homodimerization upon binding to the unmethylated CpG ligand leading to its activation. Interacts with MYD88 via their respective TIR domains. Interacts with BTK. Interacts (via transmembrane domain) with UNC93B1. Interacts with CD300LH; the interaction may promote full activation of TLR9-triggered innate responses. Interacts with CNPY3 and HSP90B1; this interaction is required for proper folding in the endoplasmic reticulum. Interacts with SMPDL3B. Interacts with CD82; this interaction is essential for TLR9-dependent myddosome formation in response to CpG stimulation. Activated by proteolytic cleavage of the flexible loop between repeats LRR14 and LRR15 within the ectodomain. Cleavage requires UNC93B1. Proteolytically processed by first removing the majority of the ectodomain by either asparagine endopeptidase (AEP) or a cathepsin followed by a trimming event that is solely cathepsin mediated and required for optimal receptor signaling. Post-translationally, palmitoylated by ZDHHC3 in the Golgi regulates TLR9 trafficking from the Golgi to endosomes. Depalmitoylation by PPT1 controls the release of TLR9 from UNC93B1 in endosomes.

The protein localises to the endoplasmic reticulum membrane. It localises to the endosome. The protein resides in the lysosome. It is found in the cytoplasmic vesicle. Its subcellular location is the phagosome. Functionally, key component of innate and adaptive immunity. TLRs (Toll-like receptors) control host immune response against pathogens through recognition of molecular patterns specific to microorganisms. TLR9 is a nucleotide-sensing TLR which is activated by unmethylated cytidine-phosphate-guanosine (CpG) dinucleotides. Acts via MYD88 and TRAF6, leading to NF-kappa-B activation, cytokine secretion and the inflammatory response. Upon CpG stimulation, induces B-cell proliferation, activation, survival and antibody production. The sequence is that of Toll-like receptor 9 (TLR9) from Bos taurus (Bovine).